The sequence spans 1288 residues: (E3-independent) E2 ubiquitin-conjugating enzyme UBE2O (1288 aa).

Composition is skewed to low complexity over residues 1–26 (MADPAAPAPAQAQAAAAPTPAAAPAA) and 34–47 (ATDSASGPSSDSGP). Disordered stretches follow at residues 1-51 (MADP…EAGS) and 80-109 (EDSDSEGDDDGRGSSGCSEAGGAGHEEGRA). Residues Ser-45, Ser-82, Ser-84, and Ser-394 each carry the phosphoserine modification. 2 disordered regions span residues 396–529 (TPDT…KNKV) and 711–743 (ESDYDSVEGSSSGASSDEWEDDSDSWETDNGLV). The span at 401–418 (CPRDHSMEDPDKKGEARA) shows a compositional bias: basic and acidic residues. Ser-436 is modified (phosphoserine). The segment covering 440–450 (MQDEGSEELQE) has biased composition (acidic residues). The span at 462-472 (EGGDDGLHSAE) shows a compositional bias: basic and acidic residues. Over residues 473–485 (QDADDEAADDTDD) the composition is skewed to acidic residues. Thr-483 and Thr-486 each carry phosphothreonine. The span at 486-502 (TSSVTSSASSTTSSQSG) shows a compositional bias: low complexity. Ser-510 carries the phosphoserine modification. Residues 517–528 (NLKRKHKRKKNK) show a composition bias toward basic residues. The span at 717 to 726 (VEGSSSGASS) shows a compositional bias: low complexity. The segment covering 727–737 (DEWEDDSDSWE) has biased composition (acidic residues). A coiled-coil region spans residues 809–879 (RELKEAIKIL…IAEEEKMEAV (71 aa)). Ser-833 bears the Phosphoserine mark. Phosphothreonine is present on Thr-835. Ser-836 carries the post-translational modification Phosphoserine. A compositionally biased stretch (basic and acidic residues) spans 872–890 (EEEKMEAVPDTERKEEKPE). Positions 872-899 (EEEKMEAVPDTERKEEKPEVQSPVKAEW) are disordered. Ser-893 carries the post-translational modification Phosphoserine. The UBC core domain maps to 950 to 1110 (KFFSTVRKEM…ALIRVVQSMT (161 aa)). Residue Cys-1037 is the Glycyl thioester intermediate of the active site. The segment at 1158-1247 (GALKDSSSLE…RSFLPEKSGY (90 aa)) is disordered.

The protein belongs to the ubiquitin-conjugating enzyme family. As to quaternary structure, interacts with CPNE1 (via VWFA domain) and CPNE4 (via VWFA domain). Interacts with UBR2. In terms of processing, phosphorylated. Phosphorylation affects subcellular location. Ubiquitinated: autoubiquitinates, possibly affecting its subcellular location. Highly expressed in reticulocytes.

Its subcellular location is the cytoplasm. The protein resides in the nucleus. It carries out the reaction S-ubiquitinyl-[E1 ubiquitin-activating enzyme]-L-cysteine + [acceptor protein]-L-lysine = [E1 ubiquitin-activating enzyme]-L-cysteine + N(6)-monoubiquitinyl-[acceptor protein]-L-lysine.. It participates in protein modification; protein ubiquitination. Inhibited by inorganic arsenite such as phenylarsenoxides. E2/E3 hybrid ubiquitin-protein ligase that displays both E2 and E3 ligase activities and mediates monoubiquitination of target proteins. Negatively regulates TRAF6-mediated NF-kappa-B activation independently of its E2 activity. Acts as a positive regulator of BMP7 signaling by mediating monoubiquitination of SMAD6, thereby regulating adipogenesis. Mediates monoubiquitination at different sites of the nuclear localization signal (NLS) of BAP1, leading to cytoplasmic retention of BAP1. Also able to monoubiquitinate the NLS of other chromatin-associated proteins, such as INO80 and CXXC1, affecting their subcellular location. Acts as a regulator of retrograde transport by assisting the TRIM27:MAGEL2 E3 ubiquitin ligase complex to mediate 'Lys-63'-linked ubiquitination of WASHC1, leading to promote endosomal F-actin assembly. This chain is (E3-independent) E2 ubiquitin-conjugating enzyme UBE2O (Ube2o), found in Mus musculus (Mouse).